Here is a 278-residue protein sequence, read N- to C-terminus: Splicing factor YJU2 (278 aa).

4 residues coordinate Zn(2+): C51, C54, C88, and C91. Residues H228 to K278 are disordered. Short sequence motifs (nuclear localization signal) lie at residues K242–K258 and S260–K278.

The protein belongs to the CWC16 family. YJU2 subfamily. As to quaternary structure, component of the spliceosome. Present in the activated B complex, the catalytically activated B* complex which catalyzes the branching, the catalytic step 1 C complex catalyzing the exon ligation, and the postcatalytic P complex containing the ligated exons (mRNA) and the excised lariat intron. Interacts (via C-terminus) with CLF1. Interacts (via N-terminus) with SYF1. Interacts with U2 snRNA; this interaction is direct. Identified in the CWC complex (or CEF1-associated complex), a spliceosome sub-complex reminiscent of a late-stage spliceosome composed of the U2, U5 and U6 snRNAs and at least BUD13, BUD31, BRR2, CDC40, CEF1, CLF1, CUS1, CWC2, CWC15, CWC21, CWC22, CWC23, CWC24, CWC25, CWC27, ECM2, HSH155, IST3, ISY1, LEA1, MSL1, NTC20, PRP8, PRP9, PRP11, PRP19, PRP21, PRP22, PRP45, PRP46, SLU7, SMB1, SMD1, SMD2, SMD3, SMX2, SMX3, SNT309, SNU114, SPP2, SYF1, SYF2, RSE1 and YJU2.

It is found in the nucleus. In terms of biological role, part of the spliceosome which catalyzes two sequential transesterification reactions, first the excision of the non-coding intron from pre-mRNA and then the ligation of the coding exons to form the mature mRNA. Plays a role (via N-terminus) in stabilizing the structure of the spliceosome catalytic core and docking of the branch helix into the active site, producing 5'-exon and lariat intron-3'-intermediates. Further stabilizes spliceosome conformation for 3'-splice site docking (via C-terminus) promoting exon ligation. The polypeptide is Splicing factor YJU2 (Saccharomyces cerevisiae (strain ATCC 204508 / S288c) (Baker's yeast)).